Reading from the N-terminus, the 403-residue chain is Serine/threonine transporter SstT (403 aa).

Transmembrane regions (helical) follow at residues 14–34 (VTQIVIGLLAGIALALLAPAI), 44–64 (VFVSALKAVAPVLVFILVMAS), 79–99 (ILWLYLLGTFAAAVVAVVASM), 138–158 (ALLNANFIGVLTWAIGLGVAL), 175–195 (GVTLIVRVVIRFAPLGIFGLV), 214–234 (LAVLIGCMLFVALVMNPLIVF), 295–315 (MAGAAITITVLTLAAVHTLGI), 327–347 (VVAAVCACGASGVAGGSLLLI), and 353–373 (LFGIPSEIAMQVVAVGFIIGV).

This sequence belongs to the dicarboxylate/amino acid:cation symporter (DAACS) (TC 2.A.23) family.

It is found in the cell inner membrane. The enzyme catalyses L-serine(in) + Na(+)(in) = L-serine(out) + Na(+)(out). It carries out the reaction L-threonine(in) + Na(+)(in) = L-threonine(out) + Na(+)(out). Functionally, involved in the import of serine and threonine into the cell, with the concomitant import of sodium (symport system). The sequence is that of Serine/threonine transporter SstT from Pseudomonas putida (strain ATCC 700007 / DSM 6899 / JCM 31910 / BCRC 17059 / LMG 24140 / F1).